A 136-amino-acid chain; its full sequence is ATP synthase epsilon chain (136 aa).

The disordered stretch occupies residues 106–136 (MEGQPSSPEKLKAQQQLNEARARLQASKTAD).

Belongs to the ATPase epsilon chain family. In terms of assembly, F-type ATPases have 2 components, CF(1) - the catalytic core - and CF(0) - the membrane proton channel. CF(1) has five subunits: alpha(3), beta(3), gamma(1), delta(1), epsilon(1). CF(0) has three main subunits: a, b and c.

Its subcellular location is the cellular thylakoid membrane. Functionally, produces ATP from ADP in the presence of a proton gradient across the membrane. In Synechococcus sp. (strain CC9605), this protein is ATP synthase epsilon chain.